The chain runs to 343 residues: Polyprenyl transferase spyF (343 aa).

The next 8 membrane-spanning stretches (helical) occupy residues 38-58 (WLAV…SHPL), 62-82 (VSVW…PASI), 92-112 (LLCL…NDWI), 138-158 (GFIW…STIL), 170-190 (LYIY…AIGW), 241-261 (AYVA…GLVL), 273-293 (SGWL…HQLL), and 311-331 (FALG…SSGM).

Belongs to the UbiA prenyltransferase family. Mg(2+) is required as a cofactor.

It is found in the membrane. The enzyme catalyses triacetate lactone + (2E,6E,10E)-geranylgeranyl diphosphate = (2E,6E,10E)-geranylgeranyl-triacetate lactone + diphosphate. It functions in the pathway secondary metabolite biosynthesis; terpenoid biosynthesis. Its function is as follows. Polyprenyl transferase; part of the gene cluster that mediates the biosynthesis of meroterpenoids called sartorypyrones. Within the pathway, spyF catalyzes the prenylation of triacetic acid lactone (TAL) to produce geranylgeranyl-triacetate lactone. The biosynthesis of sartorypyrones begins with the production of triacetic acid lactone (TAL) by the NR-PKS spyA using one molecule of acetyl-CoA and two molecules of malonyl-CoA. The prenyltransferase spyF then conjugates geranylgeranyl pyrophosphate (GGPP) to TAL to form geranylgeranyl-triacetate lactone, for which the pathway-specific geranylgeranyl pyrophosphate synthase (GGPS) spyE is required to provide GGPP. Subsequently, geranylgeranyl-triacetate lactone is epoxidized at the terminal olein by the FAD-dependent monooxygenase spyC, followed by cyclization of the terpenoid component catalyzed by the terpene cyclase spyD to produce both the bicyclic sartorypyrone F and the monocyclic sartorypyrone D. Finally, the last step of the biosynthesis involves the acetylation of the meroterpenoids sartorypyrones D and F by the acetyltransferase SpyB to produce sartorypyrones A and G, respectively. In Aspergillus fumigatus (strain ATCC MYA-4609 / CBS 101355 / FGSC A1100 / Af293) (Neosartorya fumigata), this protein is Polyprenyl transferase spyF.